The primary structure comprises 622 residues: WD repeat-containing protein 46 (622 aa).

The segment at 1-135 is disordered; it reads METAPKPGRG…KTQSKLEKAE (135 aa). Phosphoserine is present on serine 41. Residues 106–118 are compositionally biased toward basic and acidic residues; the sequence is EEARKFCRIDKSK. WD repeat units follow at residues 192 to 233, 234 to 271, 314 to 353, 356 to 395, and 398 to 435; these read LRQF…CEIN, VMEA…LHCI, VRAG…PLAK, CHRG…QPLS, and TLPQ…SPPS. A disordered region spans residues 547–622; that stretch reads AAFQPKAKQK…AREGGLQVDP (76 aa). Over residues 571 to 582 the composition is skewed to basic and acidic residues; the sequence is VMDQEHRDKVRQ.

As to quaternary structure, part of the small subunit (SSU) processome, composed of more than 70 proteins and the RNA chaperone small nucleolar RNA (snoRNA) U3. Interacts with DDX21, NCL, NOP2 and EBNA1BP2.

It localises to the nucleus. Its subcellular location is the nucleolus. Scaffold component of the nucleolar structure. Required for localization of DDX21 and NCL to the granular compartment of the nucleolus. Part of the small subunit (SSU) processome, first precursor of the small eukaryotic ribosomal subunit. During the assembly of the SSU processome in the nucleolus, many ribosome biogenesis factors, an RNA chaperone and ribosomal proteins associate with the nascent pre-rRNA and work in concert to generate RNA folding, modifications, rearrangements and cleavage as well as targeted degradation of pre-ribosomal RNA by the RNA exosome. The sequence is that of WD repeat-containing protein 46 (Wdr46) from Mus musculus (Mouse).